Here is a 117-residue protein sequence, read N- to C-terminus: Large ribosomal subunit protein uL18 (117 aa).

It belongs to the universal ribosomal protein uL18 family. Part of the 50S ribosomal subunit; part of the 5S rRNA/L5/L18/L25 subcomplex. Contacts the 5S and 23S rRNAs.

This is one of the proteins that bind and probably mediate the attachment of the 5S RNA into the large ribosomal subunit, where it forms part of the central protuberance. The sequence is that of Large ribosomal subunit protein uL18 from Pectobacterium atrosepticum (strain SCRI 1043 / ATCC BAA-672) (Erwinia carotovora subsp. atroseptica).